A 155-amino-acid chain; its full sequence is SsrA-binding protein (155 aa).

This sequence belongs to the SmpB family.

The protein localises to the cytoplasm. Functionally, required for rescue of stalled ribosomes mediated by trans-translation. Binds to transfer-messenger RNA (tmRNA), required for stable association of tmRNA with ribosomes. tmRNA and SmpB together mimic tRNA shape, replacing the anticodon stem-loop with SmpB. tmRNA is encoded by the ssrA gene; the 2 termini fold to resemble tRNA(Ala) and it encodes a 'tag peptide', a short internal open reading frame. During trans-translation Ala-aminoacylated tmRNA acts like a tRNA, entering the A-site of stalled ribosomes, displacing the stalled mRNA. The ribosome then switches to translate the ORF on the tmRNA; the nascent peptide is terminated with the 'tag peptide' encoded by the tmRNA and targeted for degradation. The ribosome is freed to recommence translation, which seems to be the essential function of trans-translation. This is SsrA-binding protein from Bacillus mycoides (strain KBAB4) (Bacillus weihenstephanensis).